We begin with the raw amino-acid sequence, 420 residues long: MNLASQISQAKTGNATMEWAKNYVSKLNDGQLALLQKMYADHQAKLKASEDEKKKKEMEELKMKAQQQAILDSLTQQIPIMVDVLRSSTSPDSQPSSSSSVMSSTDEDQITVKDVLIGKINKAQRQSSPNSSKPYTPRGIRERVLFDEHLYVFDKCSYDSKKRFFRCERKNTCPARIHTPFDAERVIHKVQVHNHPPPTTFDLAHYNIDYGKVKSGHILSLNGPQQTKNLLPPSLLTPKSDLEDETLSTKTEQKNASTMNILLSMTNNCDGRKPITLRLPDLFNKISEMEIHDMEMTLTKFLLENRELRTDLISRNGDLPVFFPNAHNDELVLFVADQHENDSVFQMIRVSERNEKSIRQAIQEHLQKVSNRSLMMNISSKINVPLSQQMIDQWRTEEFIRLDSSKPNFWKIHHVSKLQD.

The span at 87–104 (SSTSPDSQPSSSSSVMSS) shows a compositional bias: low complexity. 2 disordered regions span residues 87–107 (SSTS…STDE) and 119–138 (KINK…YTPR). Residues 123–134 (AQRQSSPNSSKP) show a composition bias toward polar residues. Residues 140–195 (IRERVLFDEHLYVFDKCSYDSKKRFFRCERKNTCPARIHTPFDAERVIHKVQVHNH) form an FLYWCH-type zinc finger.

Probable transcription factor. May bind to the promoters of target genes, including micro-RNA genes, in order to repress expression, and acting redundantly with flh-2. The sequence is that of FLYWCH transcription factor 3 from Caenorhabditis elegans.